A 115-amino-acid polypeptide reads, in one-letter code: Pro-neuregulin-4, membrane-bound isoform (115 aa).

At 1–62 (MPTDHEQPCG…SSIPSESNLS (62 aa)) the chain is on the extracellular side. The 42-residue stretch at 5–46 (HEQPCGPRHRSFCLNGGICYVIPTIPSPFCRCIENYTGARCE) folds into the EGF-like domain. 3 disulfides stabilise this stretch: Cys-9-Cys-23, Cys-17-Cys-34, and Cys-36-Cys-45. Asn-39 and Asn-60 each carry an N-linked (GlcNAc...) asparagine glycan. A helical membrane pass occupies residues 63-83 (AAFVVLAVLLTLTIAALCFLC). Topologically, residues 84-115 (RKGHLQRASSVQCEISLVETNNTRTRHSHREH) are cytoplasmic.

This sequence belongs to the neuregulin family. Interacts with ERBB4. Proteolytic cleavage close to the plasma membrane on the external face leads to the release of the soluble growth factor form. In terms of processing, extensive glycosylation precedes the proteolytic cleavage. In terms of tissue distribution, highly expressed in pancreas; weakly expressed in muscle.

It localises to the cell membrane. The protein resides in the secreted. Functionally, low affinity ligand for the ERBB4 tyrosine kinase receptor. Concomitantly recruits ERBB1 and ERBB2 coreceptors, resulting in ligand-stimulated tyrosine phosphorylation and activation of the ERBB receptors. Does not bind to the ERBB1, ERBB2 and ERBB3 receptors. The protein is Pro-neuregulin-4, membrane-bound isoform (Nrg4) of Mus musculus (Mouse).